We begin with the raw amino-acid sequence, 479 residues long: Glycogen synthase (479 aa).

Residue lysine 15 participates in ADP-alpha-D-glucose binding.

It belongs to the glycosyltransferase 1 family. Bacterial/plant glycogen synthase subfamily.

The enzyme catalyses [(1-&gt;4)-alpha-D-glucosyl](n) + ADP-alpha-D-glucose = [(1-&gt;4)-alpha-D-glucosyl](n+1) + ADP + H(+). It functions in the pathway glycan biosynthesis; glycogen biosynthesis. In terms of biological role, synthesizes alpha-1,4-glucan chains using ADP-glucose. The chain is Glycogen synthase from Clostridium beijerinckii (strain ATCC 51743 / NCIMB 8052) (Clostridium acetobutylicum).